The primary structure comprises 115 residues: NADH-ubiquinone oxidoreductase chain 3 (115 aa).

3 helical membrane passes run 3-23 (FVLA…ITFW), 55-75 (FFLV…LLPL), and 84-104 (LPLM…GLTY).

This sequence belongs to the complex I subunit 3 family. In terms of assembly, core subunit of respiratory chain NADH dehydrogenase (Complex I) which is composed of 45 different subunits. Interacts with TMEM186. Interacts with TMEM242.

The protein localises to the mitochondrion inner membrane. It catalyses the reaction a ubiquinone + NADH + 5 H(+)(in) = a ubiquinol + NAD(+) + 4 H(+)(out). Functionally, core subunit of the mitochondrial membrane respiratory chain NADH dehydrogenase (Complex I) which catalyzes electron transfer from NADH through the respiratory chain, using ubiquinone as an electron acceptor. Essential for the catalytic activity of complex I. This chain is NADH-ubiquinone oxidoreductase chain 3, found in Pongo abelii (Sumatran orangutan).